The following is a 313-amino-acid chain: Protein YABBY 3 (313 aa).

The C4-type zinc-finger motif lies at 65–92 (CHYCDTVLVVSVPSSSLFETVTVRCGHC). 2 disordered regions span residues 107-149 (TTAA…SLLD) and 180-221 (NNSP…KRQR). Over residues 112–128 (APPPPPPPPPPPPPPAA) the composition is skewed to pro residues.

The protein belongs to the YABBY family. Expressed in shoot apex and young inflorescences.

It localises to the nucleus. The polypeptide is Protein YABBY 3 (YAB3) (Oryza sativa subsp. japonica (Rice)).